The primary structure comprises 64 residues: Translational regulator CsrA (64 aa).

This sequence belongs to the CsrA/RsmA family. In terms of assembly, homodimer; the beta-strands of each monomer intercalate to form a hydrophobic core, while the alpha-helices form wings that extend away from the core.

It is found in the cytoplasm. In terms of biological role, a key translational regulator that binds mRNA to regulate translation initiation and/or mRNA stability. Mediates global changes in gene expression, shifting from rapid growth to stress survival by linking envelope stress, the stringent response and the catabolite repression systems. Usually binds in the 5'-UTR; binding at or near the Shine-Dalgarno sequence prevents ribosome-binding, repressing translation, binding elsewhere in the 5'-UTR can activate translation and/or stabilize the mRNA. Its function is antagonized by small RNA(s). The sequence is that of Translational regulator CsrA from Methylococcus capsulatus (strain ATCC 33009 / NCIMB 11132 / Bath).